The following is a 296-amino-acid chain: MIKVYNRITKEYEEENVAGKKFIKWTYETPVGKSITELIAKRKIFSKFYGKFCDTKRSAKKIPDFVENFNIDMNIAEKNISDFNSFNDFFVRNLIPTSRPIDTNENILISPGDGRITVYDNIDLDNIVQIKGLTYSLRELIKNDQITENYKDGICIILRLCPTDYHRFHFVDSGIPCETHKIKGHYYSVNPIALNSIPKLFCENKREWNIFKSENFGDILTVEVGATCVGSIIQTYEPNKRVLKGAEKGYFKFGGSTTILFLEKDKVKIDNDILEQSKQGYECKVLFGETIGTKIL.

Residues D113, H169, and S256 each act as charge relay system; for autoendoproteolytic cleavage activity in the active site. S256 acts as the Schiff-base intermediate with substrate; via pyruvic acid; for decarboxylase activity in catalysis. Position 256 is a pyruvic acid (Ser); by autocatalysis (S256).

It belongs to the phosphatidylserine decarboxylase family. PSD-B subfamily. Prokaryotic type II sub-subfamily. As to quaternary structure, heterodimer of a large membrane-associated beta subunit and a small pyruvoyl-containing alpha subunit. The cofactor is pyruvate. In terms of processing, is synthesized initially as an inactive proenzyme. Formation of the active enzyme involves a self-maturation process in which the active site pyruvoyl group is generated from an internal serine residue via an autocatalytic post-translational modification. Two non-identical subunits are generated from the proenzyme in this reaction, and the pyruvate is formed at the N-terminus of the alpha chain, which is derived from the carboxyl end of the proenzyme. The autoendoproteolytic cleavage occurs by a canonical serine protease mechanism, in which the side chain hydroxyl group of the serine supplies its oxygen atom to form the C-terminus of the beta chain, while the remainder of the serine residue undergoes an oxidative deamination to produce ammonia and the pyruvoyl prosthetic group on the alpha chain. During this reaction, the Ser that is part of the protease active site of the proenzyme becomes the pyruvoyl prosthetic group, which constitutes an essential element of the active site of the mature decarboxylase.

The protein localises to the cell membrane. The enzyme catalyses a 1,2-diacyl-sn-glycero-3-phospho-L-serine + H(+) = a 1,2-diacyl-sn-glycero-3-phosphoethanolamine + CO2. It functions in the pathway phospholipid metabolism; phosphatidylethanolamine biosynthesis; phosphatidylethanolamine from CDP-diacylglycerol: step 2/2. Its function is as follows. Catalyzes the formation of phosphatidylethanolamine (PtdEtn) from phosphatidylserine (PtdSer). The polypeptide is Phosphatidylserine decarboxylase proenzyme (Clostridium botulinum (strain Alaska E43 / Type E3)).